A 332-amino-acid chain; its full sequence is DNA-directed RNA polymerase subunit alpha (332 aa).

Positions 1–234 (MIEYVIPKKL…NHLQIITDSL (234 aa)) are alpha N-terminal domain (alpha-NTD). The segment at 264-332 (AVYSKKIDEL…KFGLSLKKGG (69 aa)) is alpha C-terminal domain (alpha-CTD).

Belongs to the RNA polymerase alpha chain family. Homodimer. The RNAP catalytic core consists of 2 alpha, 1 beta, 1 beta' and 1 omega subunit. When a sigma factor is associated with the core the holoenzyme is formed, which can initiate transcription.

The enzyme catalyses RNA(n) + a ribonucleoside 5'-triphosphate = RNA(n+1) + diphosphate. DNA-dependent RNA polymerase catalyzes the transcription of DNA into RNA using the four ribonucleoside triphosphates as substrates. This is DNA-directed RNA polymerase subunit alpha from Pseudothermotoga lettingae (strain ATCC BAA-301 / DSM 14385 / NBRC 107922 / TMO) (Thermotoga lettingae).